Reading from the N-terminus, the 1385-residue chain is DNA-directed RNA polymerase subunit beta' (1385 aa).

Zn(2+) contacts are provided by C72, C74, C87, and C90. D467, D469, and D471 together coordinate Mg(2+). Zn(2+) is bound by residues C829, C910, C917, and C920.

This sequence belongs to the RNA polymerase beta' chain family. As to quaternary structure, the RNAP catalytic core consists of 2 alpha, 1 beta, 1 beta' and 1 omega subunit. When a sigma factor is associated with the core the holoenzyme is formed, which can initiate transcription. Mg(2+) serves as cofactor. It depends on Zn(2+) as a cofactor.

The enzyme catalyses RNA(n) + a ribonucleoside 5'-triphosphate = RNA(n+1) + diphosphate. Functionally, DNA-dependent RNA polymerase catalyzes the transcription of DNA into RNA using the four ribonucleoside triphosphates as substrates. This is DNA-directed RNA polymerase subunit beta' from Elusimicrobium minutum (strain Pei191).